The primary structure comprises 412 residues: Membrane fusion protein MtrC (412 aa).

An N-terminal signal peptide occupies residues 1–24 (MAFYASKAMRAAALAAAVALALSS). C25 carries the N-palmitoyl cysteine lipid modification. The S-diacylglycerol cysteine moiety is linked to residue C25. Residues 377-412 (AKKVTPKEWAPSENQAAAPQAGVQTASEAKPASEAK) form a disordered region. Residues 388–403 (SENQAAAPQAGVQTAS) are compositionally biased toward polar residues.

This sequence belongs to the membrane fusion protein (MFP) (TC 8.A.1) family.

Its subcellular location is the cell inner membrane. In terms of biological role, cell membrane lipoprotein, involved in cell membrane permeability to hydrophobic compounds such as antibiotics, dyes and detergents. The polypeptide is Membrane fusion protein MtrC (mtrC) (Neisseria gonorrhoeae).